We begin with the raw amino-acid sequence, 387 residues long: Alanine racemase (387 aa).

The Proton acceptor; specific for D-alanine role is filled by lysine 38. Lysine 38 carries the post-translational modification N6-(pyridoxal phosphate)lysine. Arginine 136 provides a ligand contact to substrate. Tyrosine 267 acts as the Proton acceptor; specific for L-alanine in catalysis. Methionine 316 contributes to the substrate binding site.

This sequence belongs to the alanine racemase family. Requires pyridoxal 5'-phosphate as cofactor.

It catalyses the reaction L-alanine = D-alanine. The protein operates within amino-acid biosynthesis; D-alanine biosynthesis; D-alanine from L-alanine: step 1/1. Its function is as follows. Catalyzes the interconversion of L-alanine and D-alanine. May also act on other amino acids. The chain is Alanine racemase (alr) from Clostridium tetani (strain Massachusetts / E88).